The sequence spans 195 residues: Imidazoleglycerol-phosphate dehydratase (195 aa).

It belongs to the imidazoleglycerol-phosphate dehydratase family.

The protein resides in the cytoplasm. The catalysed reaction is D-erythro-1-(imidazol-4-yl)glycerol 3-phosphate = 3-(imidazol-4-yl)-2-oxopropyl phosphate + H2O. Its pathway is amino-acid biosynthesis; L-histidine biosynthesis; L-histidine from 5-phospho-alpha-D-ribose 1-diphosphate: step 6/9. The polypeptide is Imidazoleglycerol-phosphate dehydratase (Roseobacter denitrificans (strain ATCC 33942 / OCh 114) (Erythrobacter sp. (strain OCh 114))).